The primary structure comprises 192 residues: Elongation factor P (192 aa).

It belongs to the elongation factor P family.

It localises to the cytoplasm. It participates in protein biosynthesis; polypeptide chain elongation. In terms of biological role, involved in peptide bond synthesis. Stimulates efficient translation and peptide-bond synthesis on native or reconstituted 70S ribosomes in vitro. Probably functions indirectly by altering the affinity of the ribosome for aminoacyl-tRNA, thus increasing their reactivity as acceptors for peptidyl transferase. This Aquifex aeolicus (strain VF5) protein is Elongation factor P (efp).